Reading from the N-terminus, the 63-residue chain is Cecropin-1/3 (63 aa).

A signal peptide spans 1-23 (MNFYKVFIFVALILAISLGQSEA). Arginine amide is present on Arg-62.

It belongs to the cecropin family.

It localises to the secreted. Functionally, cecropins have lytic and antibacterial activity against several Gram-positive and Gram-negative bacteria. The polypeptide is Cecropin-1/3 (Cec1) (Drosophila virilis (Fruit fly)).